The sequence spans 475 residues: ATP synthase subunit beta, chloroplastic (475 aa).

156–163 serves as a coordination point for ATP; it reads GGAGVGKT.

Belongs to the ATPase alpha/beta chains family. As to quaternary structure, F-type ATPases have 2 components, CF(1) - the catalytic core - and CF(0) - the membrane proton channel. CF(1) has five subunits: alpha(3), beta(3), gamma(1), delta(1), epsilon(1). CF(0) has four main subunits: a(1), b(1), b'(1) and c(9-12).

The protein resides in the plastid. It is found in the chloroplast thylakoid membrane. The catalysed reaction is ATP + H2O + 4 H(+)(in) = ADP + phosphate + 5 H(+)(out). In terms of biological role, produces ATP from ADP in the presence of a proton gradient across the membrane. The catalytic sites are hosted primarily by the beta subunits. This chain is ATP synthase subunit beta, chloroplastic, found in Trieres chinensis (Marine centric diatom).